An 803-amino-acid chain; its full sequence is Translation initiation factor IF-2 (803 aa).

Positions 65 to 75 (PDKVEEKKEHT) are enriched in basic and acidic residues. The interval 65–186 (PDKVEEKKEH…PKSRKSKTLK (122 aa)) is disordered. Residues 175-185 (NKPKSRKSKTL) are compositionally biased toward basic residues. Residues 300–468 (IRPPVVTIMG…ILLTADAALE (169 aa)) form the tr-type G domain. Residues 309–316 (GHVDHGKT) are G1. Residue 309 to 316 (GHVDHGKT) participates in GTP binding. A G2 region spans residues 334–338 (GITQH). Residues 355 to 358 (DTPG) form a G3 region. Residues 355–359 (DTPGH) and 409–412 (NKID) each bind GTP. Positions 409–412 (NKID) are G4. The segment at 445-447 (SAK) is G5.

Belongs to the TRAFAC class translation factor GTPase superfamily. Classic translation factor GTPase family. IF-2 subfamily.

Its subcellular location is the cytoplasm. One of the essential components for the initiation of protein synthesis. Protects formylmethionyl-tRNA from spontaneous hydrolysis and promotes its binding to the 30S ribosomal subunits. Also involved in the hydrolysis of GTP during the formation of the 70S ribosomal complex. The protein is Translation initiation factor IF-2 of Tropheryma whipplei (strain Twist) (Whipple's bacillus).